A 410-amino-acid polypeptide reads, in one-letter code: Neurotensin receptor type 2 (410 aa).

Topologically, residues 1-32 are extracellular; sequence METSSPRPPRPSSNPGLSLDARLGVDTRLWAK. A helical membrane pass occupies residues 33–55; it reads VLFTALYALIWALGAAGNALSAH. The Cytoplasmic segment spans residues 56–64; the sequence is VVLKARAGR. Residues 65-87 form a helical membrane-spanning segment; sequence AGRLRHHVLSLALAGLLLLLVGV. Residues 88 to 109 are Extracellular-facing; that stretch reads PVELYSFVWFHYPWVFGDLGCR. A disulfide bond links cysteine 108 and cysteine 194. The chain crosses the membrane as a helical span at residues 110–131; it reads GYYFVHELCAYATVLSVAGLSA. At 132 to 154 the chain is on the cytoplasmic side; it reads ERCLAVCQPLRARSLLTPRRTRW. Residues 155-176 traverse the membrane as a helical segment; that stretch reads LVALSWAASLGLALPMAVIMGQ. Residues 177–217 lie on the Extracellular side of the membrane; sequence KHELETADGEPEPASRVCTVLVSRTALQVFIQVNVLVSFVL. The helical transmembrane segment at 218–237 threads the bilayer; the sequence is PLALTAFLNGVTVSHLLALC. Residues 238–297 lie on the Cytoplasmic side of the membrane; it reads SQVPSTSTPGSSTPSRLELLSEEGLLSFIVWKKTFIQGGQVSLVRHKDVRRIRSLQRSVQ. A helical membrane pass occupies residues 298–318; sequence VLRAIVVMYVICWLPYHARRL. At 319-337 the chain is on the extracellular side; it reads MYCYVPDDAWTDPLYNFYH. The helical transmembrane segment at 338–358 threads the bilayer; it reads YFYMVTNTLFYVSSAVTPLLY. At 359–410 the chain is on the cytoplasmic side; that stretch reads NAVSSSFRKLFLEAVSSLCGEHHPMKRLPPKPQSPTLMDTASGFGDPPETRT. Cysteine 377 carries the S-palmitoyl cysteine lipid modification. The interval 381-410 is disordered; that stretch reads HPMKRLPPKPQSPTLMDTASGFGDPPETRT.

The protein belongs to the G-protein coupled receptor 1 family. Neurotensin receptor subfamily. NTSR2 sub-subfamily. In terms of tissue distribution, expressed in prostate (at protein level).

It is found in the cell membrane. Its function is as follows. Receptor for the tridecapeptide neurotensin. It is associated with G proteins that activate a phosphatidylinositol-calcium second messenger system. The polypeptide is Neurotensin receptor type 2 (NTSR2) (Homo sapiens (Human)).